The sequence spans 486 residues: Shugoshin-1 (486 aa).

The stretch at isoleucine 71 to lysine 154 forms a coiled coil. 6 disordered regions span residues methionine 137–threonine 163, tyrosine 187–glutamate 209, histidine 222–asparagine 251, alanine 323–serine 346, proline 382–proline 403, and threonine 418–alanine 467. Over residues glutamate 331–serine 346 the composition is skewed to basic and acidic residues. Residues glutamine 387–serine 396 show a composition bias toward basic residues. Residues alanine 423–glutamine 433 show a composition bias toward polar residues.

Belongs to the shugoshin family. Highly expressed in roots. Expressed in panicles. Expressed at low levels in leaves.

The protein resides in the nucleus. It localises to the nucleolus. The protein localises to the chromosome. It is found in the centromere. Plays a central role in chromosome cohesion during meiosis I by preventing premature dissociation of cohesin complex from centromeres after prophase, when most of cohesin complex dissociates from chromosomes arms. Required for the timely assembly and maintenance of synaptonemal complex (SC) during early prophase I. Required for maintenance of centromeric cohesion before prophase II and correct segregation of chromatids during meiosis II. Has apparently no function in mitosis. This Oryza sativa subsp. japonica (Rice) protein is Shugoshin-1.